Here is a 229-residue protein sequence, read N- to C-terminus: Cytidylate kinase (229 aa).

ATP is bound at residue G12–T20.

The protein belongs to the cytidylate kinase family. Type 1 subfamily.

The protein resides in the cytoplasm. It carries out the reaction CMP + ATP = CDP + ADP. The catalysed reaction is dCMP + ATP = dCDP + ADP. The polypeptide is Cytidylate kinase (Pseudomonas fluorescens (strain Pf0-1)).